The following is a 365-amino-acid chain: MISYPFFSLSPPGLVPPPMAVPPVEMYSGSFWNRMRKPLPLRTQVIRFTVVFVIVSFILAVALQITHERMPDPKVTKPLPDLGFELLTKVPGMYVLADCCIGFLNILSVFTAFKLYLLHRHCVGSGEPELPCNIPGVSRFFLSVWLCKENCRIELRNIHTIAWIRFITSYALLLLFRSAVIVMTSLPAPDDLCQDPPKIENPVKNVILTVLTAGGGSIHCGDLMYSGHTVILTLHLMFHWIYGAMVHWSFRPVVTVVAIFGYYCIVASRFHYTDDVLVAIYLTIATFIAVGHNADGAPWQLQLFIRWWPCCGANSREVTEDSQPVMVAFKSEELDEMNGVLEGRQKKHGGVGDGESLMFKCGAYV.

The Cytoplasmic portion of the chain corresponds to methionine 1 to glutamine 44. A helical membrane pass occupies residues valine 45–isoleucine 65. Over threonine 66–glycine 92 the chain is Lumenal. A helical transmembrane segment spans residues methionine 93–phenylalanine 113. Over lysine 114 to arginine 165 the chain is Cytoplasmic. A helical transmembrane segment spans residues phenylalanine 166–leucine 186. Residues proline 187–threonine 229 lie on the Lumenal side of the membrane. The active site involves histidine 228. A helical transmembrane segment spans residues valine 230–phenylalanine 250. Position 251 (arginine 251) is a topological domain, cytoplasmic. The helical transmembrane segment at proline 252 to tyrosine 272 threads the bilayer. Active-site residues include histidine 271 and aspartate 275. Residues threonine 273–aspartate 275 are Lumenal-facing. A helical membrane pass occupies residues valine 276–glycine 296. Over alanine 297–valine 365 the chain is Cytoplasmic.

Belongs to the sphingomyelin synthase family.

It localises to the golgi apparatus membrane. It carries out the reaction an N-acylsphing-4-enine + a 1,2-diacyl-sn-glycero-3-phosphocholine = a sphingomyelin + a 1,2-diacyl-sn-glycerol. It catalyses the reaction an N-acylsphinganine + a 1,2-diacyl-sn-glycero-3-phosphocholine = an N-acylsphinganine-1-phosphocholine + a 1,2-diacyl-sn-glycerol. The enzyme catalyses an N-acylsphing-4-enine + a 1,2-diacyl-sn-glycero-3-phosphoethanolamine = an N-acylsphing-4-enine 1-phosphoethanolamine + a 1,2-diacyl-sn-glycerol. The catalysed reaction is an N-acylsphinganine + a 1,2-diacyl-sn-glycero-3-phosphoethanolamine = an N-acylsphinganine-1-phosphoethanolamine + a 1,2-diacyl-sn-glycerol. It carries out the reaction a 1,2-diacyl-sn-glycero-3-phospho-(1D-myo-inositol) + an N-acylsphing-4-enine = an N-acylsphing-4-enine-(1D-myo-inositol) + a 1,2-diacyl-sn-glycerol. It catalyses the reaction an N-acylsphinganine + a 1,2-diacyl-sn-glycero-3-phospho-(1D-myo-inositol) = an N-acylsphinganine-(1D-myo-inositol) + a 1,2-diacyl-sn-glycerol. Its function is as follows. Bifunctional sphingomyelin (SM)/ethanolamine phosphorylceramide (EPC) synthase with minimal inositol phosphorylceramide (IPC) synthase activity. Specificity is likely to be defined by residues in the lumenal catalytic domain that interact with the polar head groups of the phospholipid donors. SM is synthesized by both stages of the parasite life cycle, bloodstream forms (BSF) and procyclic forms (PCF), by transferring the phosphoryl headgroup from a 1,2-diacyl-sn-glycero-3-phosphocholine to an N-acylsphing-4-enine (ceramide) or an N-acylsphinganine (dihydroceramide) with release of 1,2-diacyl-sn-glycerol. Also catalyzes the reverse reaction, production of ceramide from sphingomyelin. EPC is synthesized by transferring phosphoethanolamine from a 1,2-diacyl-sn-glycero-3-phosphoethanolamine to ceramide or dihydroceramide by BSF and PCF, while IPC is confined to PCF. The ceramide/dihydroceramide ratios are skewed towards dihydroceramide in PCF parasites and ceramide in BSF parasites, this is likely due to differential expression and/or regulation of dihydroceramide desaturase, the enzyme responsible for converting dihydroceramide to ceramide. The protein is Phosphatidylcholine:ceramide cholinephosphotransferase 4 of Trypanosoma brucei brucei.